The primary structure comprises 294 residues: 2-dehydropantoate 2-reductase (294 aa).

NADP(+)-binding positions include glycine 10–glycine 15, arginine 34, lysine 74, asparagine 98, and alanine 122. Catalysis depends on lysine 178, which acts as the Proton donor. Residues lysine 178, asparagine 182, asparagine 186, asparagine 196, and asparagine 243–serine 246 contribute to the substrate site. Glutamate 258 contributes to the NADP(+) binding site.

This sequence belongs to the ketopantoate reductase family.

Its subcellular location is the cytoplasm. It carries out the reaction (R)-pantoate + NAD(+) = 2-dehydropantoate + NADH + H(+). The catalysed reaction is (R)-pantoate + NADP(+) = 2-dehydropantoate + NADPH + H(+). Its pathway is cofactor biosynthesis; coenzyme A biosynthesis. Its function is as follows. Catalyzes the NAD(P)H-dependent reduction of ketopantoate into pantoic acid. This Archaeoglobus fulgidus (strain ATCC 49558 / DSM 4304 / JCM 9628 / NBRC 100126 / VC-16) protein is 2-dehydropantoate 2-reductase.